The chain runs to 429 residues: Phosphoribosylamine--glycine ligase (429 aa).

The ATP-grasp domain maps to 109 to 316 (KDFLARHNIP…LVELCLAACE (208 aa)). Position 135-196 (135-196 (LREKGAPIVI…EEFLDGEEAS (62 aa))) interacts with ATP. The segment at 212–237 (SQDHKRVGDKDTGPNTGGMGAYSPAP) is disordered. A compositionally biased stretch (basic and acidic residues) spans 213-223 (QDHKRVGDKDT). Glu-286 and Asn-288 together coordinate Mg(2+).

This sequence belongs to the GARS family. Monomer. Mg(2+) is required as a cofactor. Mn(2+) serves as cofactor.

The enzyme catalyses 5-phospho-beta-D-ribosylamine + glycine + ATP = N(1)-(5-phospho-beta-D-ribosyl)glycinamide + ADP + phosphate + H(+). The protein operates within purine metabolism; IMP biosynthesis via de novo pathway; N(1)-(5-phospho-D-ribosyl)glycinamide from 5-phospho-alpha-D-ribose 1-diphosphate: step 2/2. This Escherichia coli O157:H7 protein is Phosphoribosylamine--glycine ligase.